The primary structure comprises 101 residues: Integration host factor subunit beta (101 aa).

Belongs to the bacterial histone-like protein family. In terms of assembly, heterodimer of an alpha and a beta chain.

Its function is as follows. This protein is one of the two subunits of integration host factor, a specific DNA-binding protein that functions in genetic recombination as well as in transcriptional and translational control. The polypeptide is Integration host factor subunit beta (Janthinobacterium sp. (strain Marseille) (Minibacterium massiliensis)).